Consider the following 111-residue polypeptide: uncharacterized protein (111 aa).

The helical transmembrane segment at 18–41 threads the bilayer; it reads FFYFFFISFYTLWIVFFLLHLSFF.

The protein resides in the membrane. This is an uncharacterized protein from Saccharomyces cerevisiae (strain ATCC 204508 / S288c) (Baker's yeast).